A 126-amino-acid chain; its full sequence is C-type natriuretic peptide 1 (126 aa).

The first 22 residues, 1 to 22, serve as a signal peptide directing secretion; the sequence is MLCPALLCAALLLLTPVEITDA. A propeptide spanning residues 23–104 is cleaved from the precursor; that stretch reads RALQQPSDAA…KRAEPDRSRR (82 aa). Cysteine 110 and cysteine 126 are joined by a disulfide.

It belongs to the natriuretic peptide family.

The protein resides in the secreted. Its function is as follows. Exhibits natriuretic and vasodepressant activity. Has cGMP-stimulating activity. May help to regulate body fluid homeostasis in a variety of aquatic environments. This chain is C-type natriuretic peptide 1, found in Takifugu rubripes (Japanese pufferfish).